Consider the following 95-residue polypeptide: Trypomastigote decay-accelerating factor (95 aa).

It belongs to the receptors of complement activation (RCA) family.

Its function is as follows. Interferes with the efficient assembly of the host C3 convertase. Could protect parasites from complement-mediated lysis by sera from a number of different species. The chain is Trypomastigote decay-accelerating factor from Trypanosoma cruzi.